The sequence spans 474 residues: Transcription factor fscB (474 aa).

Disordered stretches follow at residues 114 to 153 (VDEL…SYWT) and 207 to 242 (GKEV…NPAP). The span at 120-131 (SSDTRSSLSPSS) shows a compositional bias: low complexity. Over residues 132–153 (HNTTTGHETGLSSVTPPQSYWT) the composition is skewed to polar residues. The span at 207–221 (GKEVTKRNKRSRTEA) shows a compositional bias: basic and acidic residues. Residues 222–240 (QEASNSPCASSTADSQTNP) are compositionally biased toward polar residues.

The protein belongs to the POU transcription factor family. Class-3 subfamily.

Its subcellular location is the nucleus. Functionally, transcription factor; part of the fragmented gene cluster that mediates the biosynthesis of fusarochromene, a tryptophan-derived metabolite closely related to a group of mycotoxins including fusarochromanone. The protein is Transcription factor fscB of Fusarium equiseti (Fusarium scirpi).